The primary structure comprises 213 residues: Orotate phosphoribosyltransferase (213 aa).

Residue K26 participates in 5-phospho-alpha-D-ribose 1-diphosphate binding. 34–35 (FF) lines the orotate pocket. 5-phospho-alpha-D-ribose 1-diphosphate-binding positions include 72–73 (YK), R99, K100, K103, H105, and 124–132 (DDVITAGTA). Orotate is bound by residues T128 and R156.

Belongs to the purine/pyrimidine phosphoribosyltransferase family. PyrE subfamily. In terms of assembly, homodimer. The cofactor is Mg(2+).

It catalyses the reaction orotidine 5'-phosphate + diphosphate = orotate + 5-phospho-alpha-D-ribose 1-diphosphate. The protein operates within pyrimidine metabolism; UMP biosynthesis via de novo pathway; UMP from orotate: step 1/2. Its function is as follows. Catalyzes the transfer of a ribosyl phosphate group from 5-phosphoribose 1-diphosphate to orotate, leading to the formation of orotidine monophosphate (OMP). The sequence is that of Orotate phosphoribosyltransferase from Actinobacillus pleuropneumoniae serotype 5b (strain L20).